The chain runs to 383 residues: Acetylornithine deacetylase (383 aa).

His80 lines the Zn(2+) pocket. Asp82 is a catalytic residue. Asp112 contacts Zn(2+). Glu144 is a catalytic residue. Positions 145, 169, and 355 each coordinate Zn(2+).

This sequence belongs to the peptidase M20A family. ArgE subfamily. Homodimer. It depends on Zn(2+) as a cofactor. Co(2+) is required as a cofactor. Requires glutathione as cofactor.

Its subcellular location is the cytoplasm. The catalysed reaction is N(2)-acetyl-L-ornithine + H2O = L-ornithine + acetate. Its pathway is amino-acid biosynthesis; L-arginine biosynthesis; L-ornithine from N(2)-acetyl-L-ornithine (linear): step 1/1. Functionally, catalyzes the hydrolysis of the amide bond of N(2)-acetylated L-amino acids. Cleaves the acetyl group from N-acetyl-L-ornithine to form L-ornithine, an intermediate in L-arginine biosynthesis pathway, and a branchpoint in the synthesis of polyamines. This chain is Acetylornithine deacetylase, found in Salmonella heidelberg (strain SL476).